A 489-amino-acid polypeptide reads, in one-letter code: UDP-N-acetylmuramoyl-L-alanyl-D-glutamate--2,6-diaminopimelate ligase (489 aa).

Position 30 (S30) interacts with UDP-N-acetyl-alpha-D-muramoyl-L-alanyl-D-glutamate. 113–119 is an ATP binding site; it reads GTNGKTS. Residues 155 to 156, S182, Q188, and R190 each bind UDP-N-acetyl-alpha-D-muramoyl-L-alanyl-D-glutamate; that span reads TT. K222 carries the N6-carboxylysine modification. Residues R388, 412 to 415, G463, and E467 each bind meso-2,6-diaminopimelate; that span reads DNPR. Residues 412–415 carry the Meso-diaminopimelate recognition motif motif; the sequence is DNPR.

This sequence belongs to the MurCDEF family. MurE subfamily. The cofactor is Mg(2+). Carboxylation is probably crucial for Mg(2+) binding and, consequently, for the gamma-phosphate positioning of ATP.

It localises to the cytoplasm. The catalysed reaction is UDP-N-acetyl-alpha-D-muramoyl-L-alanyl-D-glutamate + meso-2,6-diaminopimelate + ATP = UDP-N-acetyl-alpha-D-muramoyl-L-alanyl-gamma-D-glutamyl-meso-2,6-diaminopimelate + ADP + phosphate + H(+). The protein operates within cell wall biogenesis; peptidoglycan biosynthesis. Catalyzes the addition of meso-diaminopimelic acid to the nucleotide precursor UDP-N-acetylmuramoyl-L-alanyl-D-glutamate (UMAG) in the biosynthesis of bacterial cell-wall peptidoglycan. In Coxiella burnetii (strain RSA 493 / Nine Mile phase I), this protein is UDP-N-acetylmuramoyl-L-alanyl-D-glutamate--2,6-diaminopimelate ligase.